An 833-amino-acid chain; its full sequence is Prickle-like protein 1 (833 aa).

Residues 1-22 are disordered; the sequence is MPLEMDQKISKHTFGCQRSSTS. The region spanning 14-122 is the PET domain; the sequence is FGCQRSSTSD…NIKMLSRAVM (109 aa). LIM zinc-binding domains lie at 124–188, 189–249, and 250–313; these read AMCE…ELLK, PRCS…HYAE, and YCES…EDVH. Disordered regions lie at residues 312 to 346, 432 to 456, 603 to 702, 767 to 786, and 805 to 833; these read VHASDSSDSAFQSARSRESRRSVRMGKSSRSADQC, EDNRSNEHWMSDNIKGKNDLQRNSR, CQEK…ERNP, CSSSSSDSEEEGYFLGQPIP, and NALSSSQFSQRTTKSKKKKGHKGKNCIIS. 2 stretches are compositionally biased toward basic and acidic residues: residues 432-453 and 603-614; these read EDNRSNEHWMSDNIKGKNDLQR and CQEKPPPEEKPM. Residues 669–680 are compositionally biased toward basic residues; the sequence is RPHHHRRRKSRK. The span at 817 to 833 shows a compositional bias: basic residues; the sequence is TKSKKKKGHKGKNCIIS. Cys830 carries the post-translational modification Cysteine methyl ester. Residue Cys830 is the site of S-farnesyl cysteine attachment. Positions 831–833 are cleaved as a propeptide — removed in mature form; sequence IIS.

The protein belongs to the prickle / espinas / testin family. As to quaternary structure, interacts with dvl2/dsh and mapk8/jnk1.

It is found in the cell membrane. Acts in a planar cell polarity (PCP) complex; polarization along the apical/basal axis of epithelial cells. Regulates the polarized assembly of fibronectrin on the surface of the mesoderm during gastrulation. Essential for gastrulation cell movements, cooperating with dvl2/dsh to activate jnk. Acts together with tes to control axial elongation. This Xenopus tropicalis (Western clawed frog) protein is Prickle-like protein 1.